A 551-amino-acid chain; its full sequence is Probable 4-coumarate--CoA ligase 3 (551 aa).

ATP contacts are provided by serine 205, serine 206, glycine 207, threonine 208, threonine 209, and lysine 213. Phenylalanine 253 contacts (E)-4-coumaroyl-AMP. CoA is bound at residue lysine 274. Residues glutamate 276–glutamine 346 are SBD1. 4 residues coordinate (E)-4-coumaroyl-AMP: alanine 323, glutamine 346, glycine 347, and threonine 351. ATP is bound by residues glutamine 346, glycine 347, threonine 351, aspartate 430, and arginine 445. The tract at residues glycine 347–tyrosine 409 is SBD2. (E)-4-coumaroyl-AMP is bound by residues lysine 447 and lysine 451. Residues lysine 453 and glycine 454 each coordinate CoA. Lysine 537 is an ATP binding site.

The protein belongs to the ATP-dependent AMP-binding enzyme family. It depends on Mg(2+) as a cofactor.

It catalyses the reaction (E)-4-coumarate + ATP + CoA = (E)-4-coumaroyl-CoA + AMP + diphosphate. The enzyme catalyses (E)-4-coumarate + ATP + H(+) = (E)-4-coumaroyl-AMP + diphosphate. It carries out the reaction (E)-4-coumaroyl-AMP + CoA = (E)-4-coumaroyl-CoA + AMP + H(+). It functions in the pathway phytoalexin biosynthesis; 3,4',5-trihydroxystilbene biosynthesis; 3,4',5-trihydroxystilbene from trans-4-coumarate: step 1/2. In terms of biological role, carboxylate--CoA ligase that may use 4-coumarate as substrate. Follows a two-step reaction mechanism, wherein the carboxylate substrate first undergoes adenylation by ATP, followed by a thioesterification in the presence of CoA to yield the final CoA thioester. The sequence is that of Probable 4-coumarate--CoA ligase 3 (4cl3) from Dictyostelium discoideum (Social amoeba).